The sequence spans 418 residues: MYKKIKLRDQQISELINLESKRQNSQIELIASENYASEDVILANGTSPSNKYGEGYPGKRYYGGCTFIDQIEKIAIERVKKLFKIEYANVQPYSGSSANAAVFAALLKPGDKILGLDLNAGGHLSHGYKINFSGMFYSGISYFLDENELLDYDAIEKIALKTKPNLIICGYSAYSRKIDFARFRQIADKVNAFLLADIAHIAGLIAAGQHPSPVGYAHIITSTTQKTLRGPRGGLILTNSKEIAAKIDKVVFPGIQGGPFFHTIAAKAVAFKEALEPWFKEYCAQIVKNASHFASEFIKKGIRIVSQGTENHLFTIDVLSSYNLNGKQAQILLESVNIITNKNTIPNDTLSPFVTSGLRLGTPAMTSRGFKEQEFSQMAEIIDFVLRKKELNALEIKEIKKKVKILTKNFPIKKSYWP.

(6S)-5,6,7,8-tetrahydrofolate-binding positions include Leu-118 and 122–124 (GHL). Lys-226 carries the post-translational modification N6-(pyridoxal phosphate)lysine. 351 to 353 (SPF) lines the (6S)-5,6,7,8-tetrahydrofolate pocket.

This sequence belongs to the SHMT family. Homodimer. The cofactor is pyridoxal 5'-phosphate.

It localises to the cytoplasm. It catalyses the reaction (6R)-5,10-methylene-5,6,7,8-tetrahydrofolate + glycine + H2O = (6S)-5,6,7,8-tetrahydrofolate + L-serine. Its pathway is one-carbon metabolism; tetrahydrofolate interconversion. Functionally, catalyzes the reversible interconversion of serine and glycine with tetrahydrofolate (THF) serving as the one-carbon carrier. This reaction serves as the major source of one-carbon groups required for the biosynthesis of purines, thymidylate, methionine, and other important biomolecules. The chain is Probable serine hydroxymethyltransferase from Mesomycoplasma hyopneumoniae (strain J / ATCC 25934 / NCTC 10110) (Mycoplasma hyopneumoniae).